An 84-amino-acid polypeptide reads, in one-letter code: Turripeptide IX-01 (84 aa).

An N-terminal signal peptide occupies residues 1–21; it reads MGFYMLLTVALLLTSFMSVEA. A propeptide spanning residues 22–39 is cleaved from the precursor; it reads TPVDQAERSAMKESGLAH. Intrachain disulfides connect Cys48–Cys70, Cys55–Cys74, and Cys60–Cys81.

As to expression, expressed by the venom duct.

It localises to the secreted. The chain is Turripeptide IX-01 from Gemmula speciosa (Splendid gem-turris).